Consider the following 221-residue polypeptide: Proteasome subunit beta type-1 (221 aa).

It belongs to the peptidase T1B family. In terms of assembly, the 26S proteasome consists of a 20S proteasome core and two 19S regulatory subunits. The 20S proteasome core is composed of 28 subunits that are arranged in four stacked rings, resulting in a barrel-shaped structure. The two end rings are each formed by seven alpha subunits, and the two central rings are each formed by seven beta subunits. The catalytic chamber with the active sites is on the inside of the barrel.

The protein localises to the cytoplasm. The protein resides in the nucleus. Its function is as follows. Non-catalytic component of the proteasome, a multicatalytic proteinase complex which is characterized by its ability to cleave peptides with Arg, Phe, Tyr, Leu, and Glu adjacent to the leaving group at neutral or slightly basic pH. The proteasome has an ATP-dependent proteolytic activity. This chain is Proteasome subunit beta type-1 (PBF1), found in Oryza sativa subsp. japonica (Rice).